Here is a 308-residue protein sequence, read N- to C-terminus: Ribosomal RNA small subunit methyltransferase A (308 aa).

6 residues coordinate S-adenosyl-L-methionine: asparagine 35, valine 37, glycine 62, glutamate 83, aspartate 113, and asparagine 136.

The protein belongs to the class I-like SAM-binding methyltransferase superfamily. rRNA adenine N(6)-methyltransferase family. RsmA subfamily.

It is found in the cytoplasm. It catalyses the reaction adenosine(1518)/adenosine(1519) in 16S rRNA + 4 S-adenosyl-L-methionine = N(6)-dimethyladenosine(1518)/N(6)-dimethyladenosine(1519) in 16S rRNA + 4 S-adenosyl-L-homocysteine + 4 H(+). In terms of biological role, specifically dimethylates two adjacent adenosines (A1518 and A1519) in the loop of a conserved hairpin near the 3'-end of 16S rRNA in the 30S particle. May play a critical role in biogenesis of 30S subunits. The polypeptide is Ribosomal RNA small subunit methyltransferase A (Bifidobacterium longum (strain NCC 2705)).